Reading from the N-terminus, the 274-residue chain is Rhamnulose-1-phosphate aldolase (274 aa).

Residue Glu-117 is part of the active site. Zn(2+) is bound by residues His-141, His-143, and His-212.

It belongs to the aldolase class II family. RhaD subfamily. In terms of assembly, homotetramer. Zn(2+) is required as a cofactor.

Its subcellular location is the cytoplasm. The enzyme catalyses L-rhamnulose 1-phosphate = (S)-lactaldehyde + dihydroxyacetone phosphate. The protein operates within carbohydrate degradation; L-rhamnose degradation; glycerone phosphate from L-rhamnose: step 3/3. Its function is as follows. Catalyzes the reversible cleavage of L-rhamnulose-1-phosphate to dihydroxyacetone phosphate (DHAP) and L-lactaldehyde. This is Rhamnulose-1-phosphate aldolase from Escherichia coli (strain SMS-3-5 / SECEC).